Reading from the N-terminus, the 952-residue chain is DNA topoisomerase 1 (952 aa).

Residues 12–135 (RRLVIVESPA…VKRMVFHEIT (124 aa)) form the Toprim domain. Mg(2+)-binding residues include E18 and D104. The 453-residue stretch at 150–602 (NQKLVDAQET…RFYFGEGDGT (453 aa)) folds into the Topo IA-type catalytic domain. Residues 184 to 189 (SAGRVQ) form an interaction with DNA region. Y334 serves as the catalytic O-(5'-phospho-DNA)-tyrosine intermediate. Residues 847 to 952 (RFGPYVTDGE…KATASKTSED (106 aa)) are disordered. The span at 871–884 (TPERGYELLAEKRA) shows a compositional bias: basic and acidic residues. Residues 885–906 (KGPAKKTAKKAVKKTAAKKAPA) show a composition bias toward basic residues. Composition is skewed to low complexity over residues 907–930 (KKAA…AAKS) and 937–952 (AKTA…TSED).

This sequence belongs to the type IA topoisomerase family. Monomer. Requires Mg(2+) as cofactor.

It carries out the reaction ATP-independent breakage of single-stranded DNA, followed by passage and rejoining.. Releases the supercoiling and torsional tension of DNA, which is introduced during the DNA replication and transcription, by transiently cleaving and rejoining one strand of the DNA duplex. Introduces a single-strand break via transesterification at a target site in duplex DNA. The scissile phosphodiester is attacked by the catalytic tyrosine of the enzyme, resulting in the formation of a DNA-(5'-phosphotyrosyl)-enzyme intermediate and the expulsion of a 3'-OH DNA strand. The free DNA strand then undergoes passage around the unbroken strand, thus removing DNA supercoils. Finally, in the religation step, the DNA 3'-OH attacks the covalent intermediate to expel the active-site tyrosine and restore the DNA phosphodiester backbone. Its function is as follows. Relaxes supercoiled plasmid in vitro; in the presence of sIHF (integration host factor) relaxation is decreased. In Streptomyces coelicolor (strain ATCC BAA-471 / A3(2) / M145), this protein is DNA topoisomerase 1.